The following is a 313-amino-acid chain: Small ribosomal subunit protein uS2 (313 aa).

Positions 234-243 (DEEAKEEKTK) are enriched in basic and acidic residues. Positions 234–313 (DEEAKEEKTK…ASKAEAEEGK (80 aa)) are disordered. Positions 244 to 256 (AKTTAKKVVTKKA) are enriched in basic residues. The segment covering 266–297 (AEKKSEKPTTEKRPTKEAAETKETSEEPKTKE) has biased composition (basic and acidic residues).

It belongs to the universal ribosomal protein uS2 family.

In Coxiella burnetii (strain Dugway 5J108-111), this protein is Small ribosomal subunit protein uS2.